A 118-amino-acid chain; its full sequence is MANFISLKRNEDILNIIKKQQKIHSNHIVVYFCETNLKKVRLAISISKKKFKLATQRNRIRRLIKAWFIAANVLVESYDIVVLVKPSFIDGSFVLNCDNIKKILQTIISKHKQNKINK.

The protein belongs to the RnpA family. In terms of assembly, consists of a catalytic RNA component (M1 or rnpB) and a protein subunit.

It catalyses the reaction Endonucleolytic cleavage of RNA, removing 5'-extranucleotides from tRNA precursor.. RNaseP catalyzes the removal of the 5'-leader sequence from pre-tRNA to produce the mature 5'-terminus. It can also cleave other RNA substrates such as 4.5S RNA. The protein component plays an auxiliary but essential role in vivo by binding to the 5'-leader sequence and broadening the substrate specificity of the ribozyme. In Ureaplasma urealyticum serovar 10 (strain ATCC 33699 / Western), this protein is Ribonuclease P protein component.